The sequence spans 340 residues: Biotin synthase (340 aa).

The Radical SAM core domain occupies N56 to R283. [4Fe-4S] cluster-binding residues include C71, C75, and C78. The [2Fe-2S] cluster site is built by C115, C146, C206, and R278.

It belongs to the radical SAM superfamily. Biotin synthase family. In terms of assembly, homodimer. [4Fe-4S] cluster serves as cofactor. [2Fe-2S] cluster is required as a cofactor.

The catalysed reaction is (4R,5S)-dethiobiotin + (sulfur carrier)-SH + 2 reduced [2Fe-2S]-[ferredoxin] + 2 S-adenosyl-L-methionine = (sulfur carrier)-H + biotin + 2 5'-deoxyadenosine + 2 L-methionine + 2 oxidized [2Fe-2S]-[ferredoxin]. It functions in the pathway cofactor biosynthesis; biotin biosynthesis; biotin from 7,8-diaminononanoate: step 2/2. Its function is as follows. Catalyzes the conversion of dethiobiotin (DTB) to biotin by the insertion of a sulfur atom into dethiobiotin via a radical-based mechanism. The sequence is that of Biotin synthase from Burkholderia lata (strain ATCC 17760 / DSM 23089 / LMG 22485 / NCIMB 9086 / R18194 / 383).